A 955-amino-acid polypeptide reads, in one-letter code: Aminopeptidase A (955 aa).

Residues 1–17 (MDIEDKSSKMHCMKGKH) lie on the Cytoplasmic side of the membrane. The chain crosses the membrane as a helical; Signal-anchor for type II membrane protein span at residues 18 to 38 (VAIICGVVIAVGLILGLGLGL). At 39-955 (GLKPEACNPP…LENSEQPNFV (917 aa)) the chain is on the extracellular side. The disordered stretch occupies residues 49 to 69 (EDNGLLSTKPPTTSTPNVTNP). Positions 55 to 69 (STKPPTTSTPNVTNP) are enriched in low complexity. N-linked (GlcNAc...) asparagine glycosylation is found at Asn-65, Asn-118, and Asn-192. Residue Glu-218 coordinates substrate. Asn-312, Asn-319, and Asn-335 each carry an N-linked (GlcNAc...) asparagine glycan. 352–356 (GAMEN) serves as a coordination point for substrate. His-388 is a Zn(2+) binding site. Glu-389 functions as the Proton acceptor in the catalytic mechanism. Zn(2+)-binding residues include His-392 and Glu-411. 11 N-linked (GlcNAc...) asparagine glycosylation sites follow: Asn-458, Asn-547, Asn-584, Asn-592, Asn-647, Asn-674, Asn-681, Asn-759, Asn-766, Asn-823, and Asn-836. Residue Arg-882 participates in substrate binding.

Belongs to the peptidase M1 family. As to quaternary structure, homodimer; disulfide-linked. The cofactor is Zn(2+).

It is found in the cell membrane. It catalyses the reaction Release of N-terminal glutamate (and to a lesser extent aspartate) from a peptide.. With respect to regulation, the partially purified protein is inhibited by the aminopeptidase competitive inhibitors amastatin (Leu and acidic inhibitor), and bestatin (Leu inhibitor), by chelating agents EDTA, and 1,10-Phenanthroline, as well as by Zn(2+) ions. Substrate specificity is modulated by Ca(2+), Ba(2+), and Mn(2+) ions which enhances the enzymatic activity for cleavage of acidic residues. Its function is as follows. Venom protein that cleaves N-terminal acidic residues from peptides with high potency in presence of calcium. It may have several roles in venom including alteration of blood pressure by cleaving circulating angiotensin-2, general degradation of host tissue, increase of permeability to other venom components, and/or processing of other toxins in the venom. The chain is Aminopeptidase A from Gloydius brevicauda (Korean slamosa snake).